A 537-amino-acid chain; its full sequence is Interleukin-2 receptor subunit beta (537 aa).

The N-terminal stretch at 1-26 (MATVDLSWRLPLYILLLLLATTWVSA) is a signal peptide. Over 27–239 (AVNDCSHLKC…FRTRPADPKE (213 aa)) the chain is Extracellular. Residues Cys-36 and Cys-46 are joined by a disulfide bond. Asn-43, Asn-55, and Asn-71 each carry an N-linked (GlcNAc...) asparagine glycan. Cys-74 and Cys-86 are disulfide-bonded. In terms of domain architecture, Fibronectin type-III spans 135 to 235 (APHSLQVLHI…QPMAFRTRPA (101 aa)). Asn-150 is a glycosylation site (N-linked (GlcNAc...) asparagine). The short motif at 221–225 (WSPWS) is the WSXWS motif element. The helical transmembrane segment at 240–267 (IFPLPWLRCLLLVLGCFFGFLSCVCVLV) threads the bilayer. Residues 268 to 537 (KCRYLGPWLK…LQAQDSAHLI (270 aa)) lie on the Cytoplasmic side of the membrane. The short motif at 280–288 (LKCHIPDPS) is the Box 1 motif element. Disordered stretches follow at residues 442 to 466 (AYGN…SLAS) and 479 to 498 (ELGD…QASV). Residues 487 to 497 (MSTNSSGQQAS) are compositionally biased toward polar residues.

The protein belongs to the type I cytokine receptor family. Type 4 subfamily. As to quaternary structure, non-covalent dimer of an alpha and a beta subunit. IL2R exists in 3 different forms: a high affinity dimer, an intermediate affinity monomer (beta subunit), and a low affinity monomer (alpha subunit). The high and intermediate affinity forms also associate with a gamma subunit. Interacts with SHB upon interleukin stimulation.

The protein resides in the cell membrane. Its subcellular location is the cell surface. Functionally, receptor for interleukin-2. This beta subunit is involved in receptor mediated endocytosis and transduces the mitogenic signals of IL2. Probably in association with IL15RA, involved in the stimulation of neutrophil phagocytosis by IL15. The chain is Interleukin-2 receptor subunit beta (Il2rb) from Rattus norvegicus (Rat).